Consider the following 351-residue polypeptide: Glycerol-3-phosphate dehydrogenase 1-like protein (351 aa).

Position 12–17 (12–17 (GSGNWG)) interacts with NAD(+). Lys122 serves as a coordination point for substrate. Ala155 is a binding site for NAD(+). Lys206 functions as the Proton acceptor in the catalytic mechanism. Positions 271, 298, and 300 each coordinate NAD(+). 271 to 272 (RN) is a substrate binding site.

Belongs to the NAD-dependent glycerol-3-phosphate dehydrogenase family. As to quaternary structure, interacts with SCN5A. In terms of tissue distribution, most highly expressed in heart tissue, with lower levels in the skeletal muscle, kidney, lung and other organs.

It is found in the cytoplasm. It carries out the reaction sn-glycerol 3-phosphate + NAD(+) = dihydroxyacetone phosphate + NADH + H(+). Its function is as follows. Plays a role in regulating cardiac sodium current; decreased enzymatic activity with resulting increased levels of glycerol 3-phosphate activating the DPD1L-dependent SCN5A phosphorylation pathway, may ultimately lead to decreased sodium current; cardiac sodium current may also be reduced due to alterations of NAD(H) balance induced by DPD1L. The polypeptide is Glycerol-3-phosphate dehydrogenase 1-like protein (Homo sapiens (Human)).